The chain runs to 101 residues: MVALGHYLTLGAILFALSVIGIFLNRKNLIVLLMCIELMLLAVNLNFVAFSHYLGDMAGQVFVFFILTVAAAESAIGLAILVVLFRNRSTINVDELDTLKG.

Helical transmembrane passes span 4–24, 30–50, and 61–81; these read LGHY…GIFL, IVLL…FVAF, and VFVF…LAIL.

The protein belongs to the complex I subunit 4L family. In terms of assembly, NDH-1 is composed of 14 different subunits. Subunits NuoA, H, J, K, L, M, N constitute the membrane sector of the complex.

The protein localises to the cell inner membrane. It catalyses the reaction a quinone + NADH + 5 H(+)(in) = a quinol + NAD(+) + 4 H(+)(out). NDH-1 shuttles electrons from NADH, via FMN and iron-sulfur (Fe-S) centers, to quinones in the respiratory chain. The immediate electron acceptor for the enzyme in this species is believed to be ubiquinone. Couples the redox reaction to proton translocation (for every two electrons transferred, four hydrogen ions are translocated across the cytoplasmic membrane), and thus conserves the redox energy in a proton gradient. The chain is NADH-quinone oxidoreductase subunit K from Leptothrix cholodnii (strain ATCC 51168 / LMG 8142 / SP-6) (Leptothrix discophora (strain SP-6)).